A 339-amino-acid chain; its full sequence is 4-hydroxy-2-oxovalerate aldolase 3 (339 aa).

The region spanning 7–259 (IRVTDTSLRD…KTGIDFFAIA (253 aa)) is the Pyruvate carboxyltransferase domain. 15 to 16 (RD) lines the substrate pocket. Asp-16 is a binding site for Mn(2+). His-19 acts as the Proton acceptor in catalysis. Substrate is bound by residues Ser-169 and His-198. Mn(2+) is bound by residues His-198 and His-200. Tyr-289 is a substrate binding site.

Belongs to the 4-hydroxy-2-oxovalerate aldolase family.

It catalyses the reaction (S)-4-hydroxy-2-oxopentanoate = acetaldehyde + pyruvate. This is 4-hydroxy-2-oxovalerate aldolase 3 (hsaF) from Rhodococcus jostii (strain RHA1).